The sequence spans 224 residues: 7-cyano-7-deazaguanine synthase (224 aa).

10-20 contributes to the ATP binding site; that stretch reads LSGGLDSATVA. Zn(2+)-binding residues include cysteine 189, cysteine 199, cysteine 202, and cysteine 205.

Belongs to the QueC family. It depends on Zn(2+) as a cofactor.

It catalyses the reaction 7-carboxy-7-deazaguanine + NH4(+) + ATP = 7-cyano-7-deazaguanine + ADP + phosphate + H2O + H(+). Its pathway is purine metabolism; 7-cyano-7-deazaguanine biosynthesis. Functionally, catalyzes the ATP-dependent conversion of 7-carboxy-7-deazaguanine (CDG) to 7-cyano-7-deazaguanine (preQ(0)). This is 7-cyano-7-deazaguanine synthase from Azotobacter vinelandii (strain DJ / ATCC BAA-1303).